A 541-amino-acid chain; its full sequence is Chaperonin GroEL 2 (541 aa).

Residues 29 to 32, 86 to 90, glycine 413, 476 to 478, and aspartate 492 each bind ATP; these read TLGP, DGTTT, and NAA.

Belongs to the chaperonin (HSP60) family. In terms of assembly, forms a cylinder of 14 subunits composed of two heptameric rings stacked back-to-back. Interacts with the co-chaperonin GroES.

It is found in the cytoplasm. The enzyme catalyses ATP + H2O + a folded polypeptide = ADP + phosphate + an unfolded polypeptide.. Its function is as follows. Together with its co-chaperonin GroES, plays an essential role in assisting protein folding. The GroEL-GroES system forms a nano-cage that allows encapsulation of the non-native substrate proteins and provides a physical environment optimized to promote and accelerate protein folding. This Streptomyces avermitilis (strain ATCC 31267 / DSM 46492 / JCM 5070 / NBRC 14893 / NCIMB 12804 / NRRL 8165 / MA-4680) protein is Chaperonin GroEL 2.